The chain runs to 420 residues: Glutamate dehydrogenase (420 aa).

Lysine 105 is an active-site residue. An NAD(+)-binding site is contributed by 220–226 (GYGNAGY).

This sequence belongs to the Glu/Leu/Phe/Val dehydrogenases family. In terms of assembly, homohexamer.

It is found in the cytoplasm. It catalyses the reaction L-glutamate + NAD(+) + H2O = 2-oxoglutarate + NH4(+) + NADH + H(+). The enzyme catalyses L-glutamate + NADP(+) + H2O = 2-oxoglutarate + NH4(+) + NADPH + H(+). The protein is Glutamate dehydrogenase (gdhA) of Pyrococcus endeavori.